Reading from the N-terminus, the 347-residue chain is Protein RecA (347 aa).

68 to 75 (GPESSGKT) lines the ATP pocket.

This sequence belongs to the RecA family.

It localises to the cytoplasm. In terms of biological role, can catalyze the hydrolysis of ATP in the presence of single-stranded DNA, the ATP-dependent uptake of single-stranded DNA by duplex DNA, and the ATP-dependent hybridization of homologous single-stranded DNAs. It interacts with LexA causing its activation and leading to its autocatalytic cleavage. This Nocardia farcinica (strain IFM 10152) protein is Protein RecA.